The sequence spans 375 residues: Probable peptidoglycan glycosyltransferase FtsW (375 aa).

At 1–16 the chain is on the cytoplasmic side; the sequence is MNLNFKLNLKEIERYD. The chain crosses the membrane as a helical span at residues 17-37; it reads LVILLMAVALTCFGVVMVYSA. The Periplasmic portion of the chain corresponds to 38–49; it reads SSVMATKKFHDG. The chain crosses the membrane as a helical span at residues 50–70; sequence FYFLKRQGIYAILGCAAMIVA. The Cytoplasmic portion of the chain corresponds to 71-81; the sequence is MRIDYRQWREY. A helical membrane pass occupies residues 82–102; it reads AVPILLGCLLLLLLVFIPGIG. The Periplasmic segment spans residues 103–145; that stretch reads GAAKGASRWIRFPGFNLQPSELAKIALIMYMAYSLDKKQEKVK. The chain crosses the membrane as a helical span at residues 146 to 166; the sequence is FFSTGFAPYMVLLAILLAILL. Over 167–169 the chain is Cytoplasmic; it reads KQH. Residues 170–190 traverse the membrane as a helical segment; the sequence is DLGSALTMGGVAILMLFAAGT. The Periplasmic portion of the chain corresponds to 191-193; sequence RPR. Residues 194 to 214 traverse the membrane as a helical segment; sequence YILGMVVLTLPFLYFLVMNVD. At 215–233 the chain is on the cytoplasmic side; it reads YRRRRILAYLNPWEDPTNT. Residues 234–254 form a helical membrane-spanning segment; sequence GFQIIQSWLAFGNGGIIGQGL. Residues 255–279 are Periplasmic-facing; the sequence is GEGKQKMFFLPEAHTDFILSVVGEE. A helical transmembrane segment spans residues 280–300; the sequence is LGLIGVIVIAAMFLMLVLRGV. The Cytoplasmic segment spans residues 301-312; it reads RVALMAQDPFGR. A helical membrane pass occupies residues 313 to 333; that stretch reads FLAFGIVTLLGIQAFVNMGVV. Residues 334-343 are Periplasmic-facing; sequence TGLLPTKGLA. The helical transmembrane segment at 344–364 threads the bilayer; it reads LPFISYGGSSLIVTLFAVGIL. Over 365 to 375 the chain is Cytoplasmic; that stretch reads LNVSTRMKGTP.

Belongs to the SEDS family. FtsW subfamily.

Its subcellular location is the cell inner membrane. The catalysed reaction is [GlcNAc-(1-&gt;4)-Mur2Ac(oyl-L-Ala-gamma-D-Glu-L-Lys-D-Ala-D-Ala)](n)-di-trans,octa-cis-undecaprenyl diphosphate + beta-D-GlcNAc-(1-&gt;4)-Mur2Ac(oyl-L-Ala-gamma-D-Glu-L-Lys-D-Ala-D-Ala)-di-trans,octa-cis-undecaprenyl diphosphate = [GlcNAc-(1-&gt;4)-Mur2Ac(oyl-L-Ala-gamma-D-Glu-L-Lys-D-Ala-D-Ala)](n+1)-di-trans,octa-cis-undecaprenyl diphosphate + di-trans,octa-cis-undecaprenyl diphosphate + H(+). Its pathway is cell wall biogenesis; peptidoglycan biosynthesis. Peptidoglycan polymerase that is essential for cell division. This chain is Probable peptidoglycan glycosyltransferase FtsW, found in Geobacter metallireducens (strain ATCC 53774 / DSM 7210 / GS-15).